Reading from the N-terminus, the 225-residue chain is 3-dehydroquinate dehydratase (225 aa).

Residues S6, 30 to 32 (EWR), and R62 contribute to the 3-dehydroquinate site. H118 serves as the catalytic Proton donor/acceptor. K143 (schiff-base intermediate with substrate) is an active-site residue. R186, S205, and Q209 together coordinate 3-dehydroquinate.

The protein belongs to the type-I 3-dehydroquinase family. As to quaternary structure, homodimer.

The catalysed reaction is 3-dehydroquinate = 3-dehydroshikimate + H2O. It participates in metabolic intermediate biosynthesis; chorismate biosynthesis; chorismate from D-erythrose 4-phosphate and phosphoenolpyruvate: step 3/7. Involved in the third step of the chorismate pathway, which leads to the biosynthesis of aromatic amino acids. Catalyzes the cis-dehydration of 3-dehydroquinate (DHQ) and introduces the first double bond of the aromatic ring to yield 3-dehydroshikimate. This Streptococcus pneumoniae (strain Hungary19A-6) protein is 3-dehydroquinate dehydratase.